Consider the following 456-residue polypeptide: Frizzled/smoothened-like sans CRD protein F (456 aa).

The signal sequence occupies residues 1-30; it reads MIFNNLKNQNKIINFLIIFYFLSFLKQIES. Residues 31 to 92 lie on the Extracellular side of the membrane; that stretch reads QSINITSSSS…PFFTINEWNK (62 aa). N-linked (GlcNAc...) asparagine glycosylation is found at asparagine 34, asparagine 52, and asparagine 70. The helical transmembrane segment at 93 to 113 threads the bilayer; sequence FLNMSLVMGTISFFSGLFLLV. At 114-127 the chain is on the cytoplasmic side; that stretch reads TYSPIVNKTHNRHT. Residues 128-148 traverse the membrane as a helical segment; that stretch reads IGVMCMSFGVCLAMCSDMWNF. The Extracellular portion of the chain corresponds to 149-174; that stretch reads GSNFTEKSICPSPGQYLSTSNARCLS. Residue asparagine 151 is glycosylated (N-linked (GlcNAc...) asparagine). The helical transmembrane segment at 175–195 threads the bilayer; sequence SGIFLQFGGVFGFLNWTLLSF. Residues 196-211 lie on the Cytoplasmic side of the membrane; that stretch reads DLFMNIKGIITKNYDK. A helical transmembrane segment spans residues 212–232; it reads YYVSGTFIIAIIFTFVPIVND. Residues 233 to 252 are Extracellular-facing; that stretch reads QYSMSYIGLGCWLGSAMYQL. Residues 253–273 form a helical membrane-spanning segment; the sequence is IFFWILLSICLIVSSVFIILI. Residues 274–297 are Cytoplasmic-facing; it reads LKEVYIIIKLSKQKTSLKGNIRPL. A helical transmembrane segment spans residues 298 to 318; it reads ICISITGFAFFYMFFYYISIV. The Extracellular portion of the chain corresponds to 319–354; sequence VEGDYYERVLNEYTDCLMDPTKDISECKSPRMSVAS. A helical transmembrane segment spans residues 355–375; sequence EFVFLLCLRLLGIGAFIFYGI. Topologically, residues 376–456 are cytoplasmic; it reads NNKVKKIWLN…ESSLNSVDEI (81 aa). A disordered region spans residues 403 to 422; the sequence is ADNDKSNSNGSKVLYRTNNT.

It belongs to the G-protein coupled receptor Fz/Smo family.

Its subcellular location is the membrane. This is Frizzled/smoothened-like sans CRD protein F (fscF) from Dictyostelium discoideum (Social amoeba).